A 306-amino-acid chain; its full sequence is D-alanine--D-alanine ligase B (306 aa).

Active-site residues include glutamate 15 and serine 150. The 203-residue stretch at 101–303 folds into the ATP-grasp domain; the sequence is KLLWQGAGLP…FSQLVVRILE (203 aa). 134-189 is an ATP binding site; the sequence is ISSLGLPVIVKPSREGSSVGMSKVVAENALQDALRLAFQHDEEVLIEKWLSGPEFT. 3 residues coordinate Mg(2+): aspartate 257, glutamate 270, and asparagine 272. Serine 281 is a catalytic residue.

It belongs to the D-alanine--D-alanine ligase family. In terms of assembly, monomer. Requires Mg(2+) as cofactor. It depends on Mn(2+) as a cofactor.

The protein localises to the cytoplasm. The catalysed reaction is 2 D-alanine + ATP = D-alanyl-D-alanine + ADP + phosphate + H(+). It functions in the pathway cell wall biogenesis; peptidoglycan biosynthesis. Cell wall formation. This is D-alanine--D-alanine ligase B from Escherichia coli O6:H1 (strain CFT073 / ATCC 700928 / UPEC).